Consider the following 804-residue polypeptide: Endoplasmin (804 aa).

Residues 1 to 21 (MRALWVLGLCCVLLTFGSVRA) form the signal peptide. An SRT pseudosubstrate motif motif is present at residues 42 to 44 (SRT). N-linked (GlcNAc...) asparagine glycosylation occurs at Asn-62. Residue Ser-64 is modified to Phosphoserine. Asn-107 carries N-linked (GlcNAc...) asparagine glycosylation. ATP contacts are provided by Asn-107, Asp-149, and Asn-162. N6-(2-hydroxyisobutyryl)lysine is present on Lys-168. Ser-172 bears the Phosphoserine mark. Phe-199 serves as a coordination point for ATP. Asn-217 carries N-linked (GlcNAc...) asparagine glycosylation. The tract at residues 288 to 323 (TVEEPAEEEEAAKEDKEESDDEAAVEEEEDEKKPKT) is disordered. Residues 289–317 (VEEPAEEEEAAKEDKEESDDEAAVEEEED) show a composition bias toward acidic residues. Ser-306 and Ser-403 each carry phosphoserine. Position 404 is an N6-succinyllysine (Lys-404). N-linked (GlcNAc...) asparagine glycosylation occurs at Asn-445. The residue at position 447 (Ser-447) is a Phosphoserine. An N6-acetyllysine modification is found at Lys-479. Asn-481 and Asn-502 each carry an N-linked (GlcNAc...) asparagine glycan. Lys-633 carries the post-translational modification N6-succinyllysine. The disordered stretch occupies residues 750 to 804 (DPDAKVEEEPEEEPEETTEDTAEDTEQDEEEEMDAGTDEEEQETAEKSTAEKDEL). The segment covering 757-792 (EEPEEEPEETTEDTAEDTEQDEEEEMDAGTDEEEQE) has biased composition (acidic residues). Thr-786 carries the phosphothreonine modification. The segment covering 793-804 (TAEKSTAEKDEL) has biased composition (basic and acidic residues). A Prevents secretion from ER motif is present at residues 801 to 804 (KDEL).

Belongs to the heat shock protein 90 family. As to quaternary structure, homodimer; disulfide-linked. Component of an EIF2 complex at least composed of CELF1/CUGBP1, CALR, CALR3, EIF2S1, EIF2S2, HSP90B1 and HSPA5. Part of a large chaperone multiprotein complex comprising DNAJB11, HSP90B1, HSPA5, HYOU, PDIA2, PDIA4, PDIA6, PPIB, SDF2L1, UGGT1 and very small amounts of ERP29, but not, or at very low levels, CALR nor CANX. Interacts with AIMP1; regulates its retention in the endoplasmic reticulum. Hyperglycosylated form interacts with OS9; promoting its degradation by the endoplasmic reticulum associated degradation (ERAD). Interacts with CNPY3. This interaction is disrupted in the presence of ATP. Interacts with TLR4 and TLR9, but not with TLR3. Interacts with MZB1 in a calcium-dependent manner. Interacts with METTL23. Interacts with IL1B; the interaction facilitates cargo translocation into the ERGIC. Interacts with EIF2AK3. In terms of processing, phosphorylated by CK2. N-glycosylated cotranslationally at Asn-217 by STT3A-containing OST-A complex: this glycosylation is constitutive. In response to various stress, 5 additional facultative sites (Asn-62, Asn-107, Asn-445, Asn-481 and Asn-502) can be glycosylated post-translationally by STT3B-containing OST-B complex, leading to a hyperglycosylated form that is degraded by the ER-associated degradation (ERAD) pathway. In normal conditions, the OST-A complex together with CCDC134 prevent glycosylation at facultative sites during protein folding, thereby preventing hyperglycosylation. Mechanistically, nascent HSP90B1 is tethered during translation to a specialized CCDC134-containing translocon that forms a microenvironment for its folding, in which STT3A associates with the SRT pseudosubstrate motif, and prevents access to facultative glycosylation sites until folding is completed, rendering its facultative sites inaccessible to the OST-B complex.

Its subcellular location is the endoplasmic reticulum lumen. The protein resides in the sarcoplasmic reticulum lumen. The protein localises to the melanosome. The catalysed reaction is ATP + H2O = ADP + phosphate + H(+). Its function is as follows. ATP-dependent chaperone involved in the processing of proteins in the endoplasmic reticulum, regulating their transport. Together with MESD, acts as a modulator of the Wnt pathway by promoting the folding of LRP6, a coreceptor of the canonical Wnt pathway. When associated with CNPY3, required for proper folding of Toll-like receptors. Promotes folding and trafficking of TLR4 to the cell surface. May participate in the unfolding of cytosolic leaderless cargos (lacking the secretion signal sequence) such as the interleukin 1/IL-1 to facilitate their translocation into the ERGIC (endoplasmic reticulum-Golgi intermediate compartment) and secretion; the translocation process is mediated by the cargo receptor TMED10. The protein is Endoplasmin (HSP90B1) of Bos taurus (Bovine).